The primary structure comprises 118 residues: MSTYAFNRELRLLTPEHYQKVFQQAHSAGSPHLTIIARANNLSHPRLGLAVPKKQIKTAVGRNRFKRICRESFRLHQNQLANKDFVVIAKKSAQDLSNEELFNLLGKLWQRLSRPSRG.

The protein belongs to the RnpA family. Consists of a catalytic RNA component (M1 or rnpB) and a protein subunit.

It carries out the reaction Endonucleolytic cleavage of RNA, removing 5'-extranucleotides from tRNA precursor.. Functionally, RNaseP catalyzes the removal of the 5'-leader sequence from pre-tRNA to produce the mature 5'-terminus. It can also cleave other RNA substrates such as 4.5S RNA. The protein component plays an auxiliary but essential role in vivo by binding to the 5'-leader sequence and broadening the substrate specificity of the ribozyme. This chain is Ribonuclease P protein component, found in Vibrio cholerae serotype O1 (strain ATCC 39541 / Classical Ogawa 395 / O395).